The chain runs to 352 residues: Histidinol-phosphate aminotransferase (352 aa).

Residue K210 is modified to N6-(pyridoxal phosphate)lysine.

It belongs to the class-II pyridoxal-phosphate-dependent aminotransferase family. Histidinol-phosphate aminotransferase subfamily. As to quaternary structure, homodimer. Requires pyridoxal 5'-phosphate as cofactor.

It carries out the reaction L-histidinol phosphate + 2-oxoglutarate = 3-(imidazol-4-yl)-2-oxopropyl phosphate + L-glutamate. It participates in amino-acid biosynthesis; L-histidine biosynthesis; L-histidine from 5-phospho-alpha-D-ribose 1-diphosphate: step 7/9. This Clostridium acetobutylicum (strain ATCC 824 / DSM 792 / JCM 1419 / IAM 19013 / LMG 5710 / NBRC 13948 / NRRL B-527 / VKM B-1787 / 2291 / W) protein is Histidinol-phosphate aminotransferase.